A 582-amino-acid polypeptide reads, in one-letter code: Formate--tetrahydrofolate ligase (582 aa).

65-72 (TPLGEGKT) serves as a coordination point for ATP.

The protein belongs to the formate--tetrahydrofolate ligase family.

It carries out the reaction (6S)-5,6,7,8-tetrahydrofolate + formate + ATP = (6R)-10-formyltetrahydrofolate + ADP + phosphate. It functions in the pathway one-carbon metabolism; tetrahydrofolate interconversion. The chain is Formate--tetrahydrofolate ligase from Vibrio atlanticus (strain LGP32) (Vibrio splendidus (strain Mel32)).